We begin with the raw amino-acid sequence, 114 residues long: MEMVSKIACFVLLCMVVVAPHAEALTCGQVTAGLAPCLPYLQGRGPLGGCCGGVKNLLGSAKTTADRKTACTCLKSAANAIKGIDLNKAAGIPSVCKVNIPYKISPSTDCSTVQ.

The signal sequence occupies residues 1 to 23 (MEMVSKIACFVLLCMVVVAPHAE). Disulfide bonds link Cys27-Cys73, Cys37-Cys50, Cys51-Cys96, and Cys71-Cys110.

This sequence belongs to the plant LTP family.

Functionally, plant non-specific lipid-transfer proteins transfer phospholipids as well as galactolipids across membranes. May play a role in wax or cutin deposition in the cell walls of expanding epidermal cells and certain secretory tissues. The chain is Non-specific lipid-transfer protein 1 (TSW12) from Solanum lycopersicum (Tomato).